The following is a 931-amino-acid chain: MAEYKDTLNLPNTSFPMKASLSVREPEMLADWQAKGIYQKIRKARVGSKRFILHDGPPYANGHLHCGHALNKILKDIIIKSKTFSGFDAPFVPGWDCHGLPIELNVEKKVGKAGSKISPREFRAKCREYAASQIDIQRDEFQRLGVLGDWYNPYVTMDYHYEANIVRALGLMIKNGHLQQGFKPVHWCIDCGSALAEAEVDYEDKTSPSIDVAFSAVNPSEFLNCFGNQLAVKPLILPIWTTTPWTLPANEAVCLHPEIDYALIDADNSYYIVATDLVESVMARYGISHYKTSGSAKGRVFEHFKLQHPFYKRQVPVVLAEHVTTESGTGSVHTAPAHGPDDYLVGQFYQLPLINPVMANGCFAENVELFAGISVLKANETILAVLSERNVLLASESIRHSYPHCWRHKSPMIFLATPQWFISMDKSNLRQAIINEIDKVNWVPDWGKARISNMVENRPDWCISRQRSWGTPMPLFVHKTTRELHPDTLELIEKVAVMIEKSGIDAWFDLDSSELLGDDAKHYDKITDTMDVWLDSGISHYSVLKHNNDLDFPADVYFEGSDQHRGWFNSSLTTAVAMYGVAPYKTVLTHGYTVDAEGKKLSKSKGNYVALDKLVNQHGADILRLWVASTDYRHEVSISEEIIKRNADAYRRIRNTARFLLANLFDFNPASDCIDAKELLELDRWALKRCQLLQEEIITAYDNYHFHLIYQKIHNFCAVDMGSFYLDLIKDRQYTTAKDSIARRSCQTAMYHMVKAFTIWLAPILSFTAEEIWQTIPGNNSESIFIEHWYDAWPTIDAVNMEDWEQLHIVRDEVNKALEETRQRGEIGSALAAEVTVYADAKALPKLTRLGEELRFLFITSEAKACPISQSPKGLAVTDCGVSIQVTASAHEKCARCWHRREDVGQNQEHPELCLRCVGNISGYHEERLYI.

Positions 58 to 68 match the 'HIGH' region motif; the sequence is PYANGHLHCGH. Glu-559 serves as a coordination point for L-isoleucyl-5'-AMP. The short motif at 600–604 is the 'KMSKS' region element; the sequence is KLSKS. Lys-603 serves as a coordination point for ATP. Residues Cys-894, Cys-897, Cys-914, and Cys-917 each coordinate Zn(2+).

The protein belongs to the class-I aminoacyl-tRNA synthetase family. IleS type 1 subfamily. Monomer. Zn(2+) is required as a cofactor.

Its subcellular location is the cytoplasm. The enzyme catalyses tRNA(Ile) + L-isoleucine + ATP = L-isoleucyl-tRNA(Ile) + AMP + diphosphate. Catalyzes the attachment of isoleucine to tRNA(Ile). As IleRS can inadvertently accommodate and process structurally similar amino acids such as valine, to avoid such errors it has two additional distinct tRNA(Ile)-dependent editing activities. One activity is designated as 'pretransfer' editing and involves the hydrolysis of activated Val-AMP. The other activity is designated 'posttransfer' editing and involves deacylation of mischarged Val-tRNA(Ile). The chain is Isoleucine--tRNA ligase from Legionella pneumophila (strain Lens).